The primary structure comprises 75 residues: Large ribosomal subunit protein bL31 (75 aa).

The protein belongs to the bacterial ribosomal protein bL31 family. Type A subfamily. As to quaternary structure, part of the 50S ribosomal subunit.

Functionally, binds the 23S rRNA. This is Large ribosomal subunit protein bL31 from Bradyrhizobium sp. (strain BTAi1 / ATCC BAA-1182).